The following is a 92-amino-acid chain: Em-like protein GEA6 (92 aa).

Basic and acidic residues-rich tracts occupy residues 1–18 and 37–51; these read MASQ…KKGE and AEGR…KEQL. A disordered region spans residues 1–92; the sequence is MASQQEKKQL…IDESKFRTKT (92 aa).

Belongs to the small hydrophilic plant seed protein family. In terms of tissue distribution, present only in nearly dry and dry seeds.

Functionally, it is thought to provide protection for the cytoplasm during the desiccation stage of embryo development. This is Em-like protein GEA6 (EM6) from Arabidopsis thaliana (Mouse-ear cress).